A 188-amino-acid chain; its full sequence is Actin-related protein 2/3 complex subunit 3 (188 aa).

It belongs to the ARPC3 family. In terms of assembly, component of the Arp2/3 complex.

It localises to the cytoplasm. Its subcellular location is the cytoskeleton. Functionally, functions as a component of the Arp2/3 complex which is involved in regulation of actin polymerization and together with an activating nucleation-promoting factor (NPF) mediates the formation of branched actin networks. This is Actin-related protein 2/3 complex subunit 3 from Entamoeba histolytica (strain ATCC 30459 / HM-1:IMSS / ABRM).